The chain runs to 304 residues: CD-NTase-associated protein 6 (304 aa).

75 to 80 (GTGKTS) is a binding site for ATP.

The protein belongs to the AAA ATPase family. Oligomerizes. Homohexamer. Forms a 1:1:6 CdnD:Cap7:Cap6 complex.

Regulates complex assembly in a CBASS antivirus system. CBASS (cyclic oligonucleotide-based antiphage signaling system) provides immunity against bacteriophage. The CD-NTase protein synthesizes cyclic nucleotides in response to infection; these serve as specific second messenger signals. The signals activate a diverse range of effectors, leading to bacterial cell death and thus abortive phage infection. A type III-C(AAA) CBASS system. Functionally, prevents the CdnD:Cap7:Cap8 complex (also called CdnD:HORMA2:HORMA3) from synthesizing 2',3',3'-cyclic AMP-AMP-AMP (cAAA). Binds and disassembles an active CdnD:Cap7:Cap8 complex, inhibiting the complex's ability to synthesize cyclic nucleotide second messengers. An AAA+-ATPase remodeler, in the absence of foreign threat Cap6 probably maintains the Cap7 protein in an open, inactive state. Once activated (presumably by a bacteriophage protein) Cap7 binds to and activates its cognate CD-NTase (CdnD in this bacteria) to synthesize cAAA, a cyclic nucleotide second messenger. cAAA activates the NucC endonuclease which degrades all DNA in the infected cell, causing cell death and abortive phage infection. The protein is CD-NTase-associated protein 6 of Pseudomonas aeruginosa.